Here is a 4074-residue protein sequence, read N- to C-terminus: Fibrocystin (4074 aa).

The first 22 residues, 1 to 22 (MIVWLISLMSIEILLLAGPALS), serve as a signal peptide directing secretion. Asn-54 and Asn-224 each carry an N-linked (GlcNAc...) asparagine glycan. Residues 258 to 310 (EILSVFPETGSLGGKTDIIITGDFFDNPALVTIAGVPCDIRHMSPRKIECTTR) enclose the IPT/TIG 1 domain. The region spanning 323–483 (AGNRGLLFEV…TWLNPDVVST (161 aa)) is the PA14 domain. Residues Asn-355, Asn-385, Asn-518, Asn-527, Asn-640, Asn-710, Asn-741, Asn-822, Asn-829, Asn-868, Asn-953, Asn-966, Asn-976, Asn-1006, Asn-1059, Asn-1083, Asn-1115, Asn-1134, Asn-1233, Asn-1240, Asn-1274, Asn-1284, Asn-1308, Asn-1319, Asn-1342, Asn-1373, Asn-1445, Asn-1456, Asn-1471, Asn-1490, Asn-1528, Asn-1560, Asn-1578, Asn-1598, Asn-1627, Asn-1694, Asn-1760, Asn-1775, Asn-1789, Asn-1875, Asn-1915, Asn-1941, Asn-1955, Asn-2030, Asn-2111, and Asn-2140 are each glycosylated (N-linked (GlcNAc...) asparagine). The IPT/TIG 2 domain occupies 944 to 1000 (SLLIYIFGINFSGDPQALEIMVNKTNCKVIFSNQTNVICQTDLLPVGMHRLFMVVRP). IPT/TIG domains follow at residues 1018–1101 (PRLD…AFTY), 1107–1186 (PVIT…RSPG), and 1199–1274 (SIEP…WAGN). Positions 1385 to 1464 (PWIMAISPTH…LNVTVIVNGL (80 aa)) constitute an IPT/TIG 6 domain. The region spanning 1573 to 1641 (HYFPKNFSIH…LVIEVDGLSY (69 aa)) is the IPT/TIG 7 domain. The region spanning 1928–2049 (HSWFPERVPQ…PEVTFTHLQA (122 aa)) is the G8 1 domain. PbH1 repeat units lie at residues 2245-2267 (TLGL…LVGT), 2288-2322 (EQGN…YILN), 2351-2373 (APLL…FIYP), 2383-2404 (RGPT…RISR), and 2405-2427 (SSNL…DILE). Asn-2390 is a glycosylation site (N-linked (GlcNAc...) asparagine). Residues Asn-2431, Asn-2467, Asn-2531, Asn-2549, Asn-2579, Asn-2591, Asn-2749, Asn-2764, Asn-2972, and Asn-3004 are each glycosylated (N-linked (GlcNAc...) asparagine). The PbH1 6 repeat unit spans residues 2460–2483 (RWELIISNTTFVNFDLTDCVSIRT). In terms of domain architecture, G8 2 spans 2743–2869 (EGWGGHNHTI…PKKSWTRLAA (127 aa)). A PbH1 7 repeat occupies 3029–3051 (SHGIILNDNIVFGTVGHGIDLEG). N-linked (GlcNAc...) asparagine glycosylation occurs at Asn-3053. A PbH1 8 repeat occupies 3082–3104 (AKDINLYGNVVAGSERIGFHIQG). Residues Asn-3136, Asn-3165, Asn-3221, Asn-3484, Asn-3702, Asn-3721, and Asn-3833 are each glycosylated (N-linked (GlcNAc...) asparagine). One copy of the PbH1 9 repeat lies at 3158–3183 (ENSVEIENITLVDNSIGLLATVYVSS). A helical transmembrane segment spans residues 3854–3874 (IILAVSLCSVASWLALCCLVC). The segment at 3871–3888 (CLVCCWFRKSKSRKIKSE) is ciliary targeting sequence (CST). Disordered regions lie at residues 3896–3919 (NDQK…KEDT), 3943–3965 (NGVS…REED), and 4031–4074 (LQGQ…QEQL). 2 stretches are compositionally biased toward basic and acidic residues: residues 3910–3919 (RSQETKKEDT) and 3954–3965 (AVREEGSSREED). The interval 3947–3976 (RRKVSRRAVREEGSSREEDVVPAPRIISIT) is nuclear localization signal (NLS).

In terms of assembly, interacts with CAMLG. Interacts with PKD2. Interacts (via CST) with ARF4; this interaction allows an efficient PKHD1 trafficking to the cilium. Interacts (via CST) with RAB8A; this interaction controls trafficking through the endomembrane systeme and to the cilium. Interacts (via CST) with TULP3; this interaction allows PKHD1 trafficking to the cilium. Palmitoylated. Palmitoylation facilitates the trafficking to the cilia and membrane targeting. Post-translationally, N-glycosylated. In terms of processing, several proteolytic cleavages occur within the extracellular domain, whereas at least one cleavage occurs within the cytoplasmic domain. Cleaved by a probable proprotein convertase which produces an extracellular domain (polyductin extracellular domain, (PECD)) and a C-terminal fragment (polyductin transmembrane fragment (PTM)) which are tethered together by disulfide bonds. This extracellular domain (PECD) is then shed from the primary cilium by activation of a member of the ADAM metalloproteinase disintegrins family, resulting in concomitant release of an intra-cellular C-terminal fragment (ICD) via a gamma-secretase-dependent process. The proteolytic cleavage of the C-terminal intracellular fragment (ICD) is controlled by cytosolic calcium concentration and activation of PKC.

The protein localises to the cell membrane. It is found in the cytoplasm. The protein resides in the apical cell membrane. It localises to the cytoskeleton. Its subcellular location is the cilium basal body. The protein localises to the cell projection. It is found in the cilium. The protein resides in the spindle. It localises to the chromosome. Its subcellular location is the centromere. The protein localises to the nucleus. It is found in the secreted. The protein resides in the extracellular exosome. It localises to the endoplasmic reticulum. Its subcellular location is the golgi apparatus. Promotes ciliogenesis in renal epithelial cells and therefore participates in the tubules formation and/ or ensures the maintenance of the architecture of the lumen of the kidney. Has an impact on cellular symmetry by ensuring correct bipolar cell division through the regulation of centrosome duplication and mitotic spindle assembly and by maintaining oriented cell division (OCD) during tubular elongation through planar cell polarity (PCP) pathway. During epithelial cell morphogenesis, it also regulates cell-cell and cell-matrix adhesion and participates in cell motility. Promotes cell-cell contact through the positive regulation of PTK2 kinase activity leading to either positive regulation of epithelial cell proliferation through the HRAS/RAF1 pathways, or negative regulation of apoptosis through the PDK1/AKT1 pathway. May act in collecting-duct and biliary differentiation. May participate in the regulation of the cholangiocytes proliferation and the CCN2 production in an CXCL8-dependent manner. The sequence is that of Fibrocystin from Canis lupus familiaris (Dog).